The chain runs to 192 residues: U1 small nuclear ribonucleoprotein C (192 aa).

Residues Tyr-4–Glu-36 form a Matrin-type zinc finger. The segment at Pro-118–Asn-192 is disordered. Over residues Arg-133–Tyr-154 the composition is skewed to polar residues. Positions Asn-164–Asn-173 are enriched in low complexity. The segment covering Tyr-174–Asn-192 has biased composition (polar residues).

It belongs to the U1 small nuclear ribonucleoprotein C family. In terms of assembly, U1 snRNP is composed of the 7 core Sm proteins B/B', D1, D2, D3, E, F and G that assemble in a heptameric protein ring on the Sm site of the small nuclear RNA to form the core snRNP, and at least 3 U1 snRNP-specific proteins U1-70K, U1-A and U1-C. U1-C interacts with U1 snRNA and the 5' splice-site region of the pre-mRNA.

The protein resides in the nucleus. In terms of biological role, component of the spliceosomal U1 snRNP, which is essential for recognition of the pre-mRNA 5' splice-site and the subsequent assembly of the spliceosome. U1-C is directly involved in initial 5' splice-site recognition for both constitutive and regulated alternative splicing. The interaction with the 5' splice-site seems to precede base-pairing between the pre-mRNA and the U1 snRNA. Stimulates commitment or early (E) complex formation by stabilizing the base pairing of the 5' end of the U1 snRNA and the 5' splice-site region. The polypeptide is U1 small nuclear ribonucleoprotein C (Plasmodium chabaudi chabaudi).